The primary structure comprises 115 residues: Large ribosomal subunit protein P2y (115 aa).

Residues 63-115 (ASVPSGGGGGVAVASATSGGGGGGGASAAESKKEEKKEEKEESDDDMGFSLFE) are disordered. Positions 92-102 (ESKKEEKKEEK) are enriched in basic and acidic residues. At S105 the chain carries Phosphoserine.

It belongs to the eukaryotic ribosomal protein P1/P2 family. P1 and P2 exist as dimers at the large ribosomal subunit. In terms of processing, phosphorylated.

Plays an important role in the elongation step of protein synthesis. This Arabidopsis thaliana (Mouse-ear cress) protein is Large ribosomal subunit protein P2y (RPP2B).